A 190-amino-acid chain; its full sequence is Peptidyl-tRNA hydrolase (190 aa).

Y14 serves as a coordination point for tRNA. H19 (proton acceptor) is an active-site residue. Residues Y63, N65, and N112 each coordinate tRNA.

This sequence belongs to the PTH family. In terms of assembly, monomer.

Its subcellular location is the cytoplasm. The catalysed reaction is an N-acyl-L-alpha-aminoacyl-tRNA + H2O = an N-acyl-L-amino acid + a tRNA + H(+). Functionally, hydrolyzes ribosome-free peptidyl-tRNAs (with 1 or more amino acids incorporated), which drop off the ribosome during protein synthesis, or as a result of ribosome stalling. In terms of biological role, catalyzes the release of premature peptidyl moieties from peptidyl-tRNA molecules trapped in stalled 50S ribosomal subunits, and thus maintains levels of free tRNAs and 50S ribosomes. This is Peptidyl-tRNA hydrolase from Kosmotoga olearia (strain ATCC BAA-1733 / DSM 21960 / TBF 19.5.1).